The primary structure comprises 439 residues: Glutamyl-tRNA(Gln) amidotransferase subunit D (439 aa).

One can recognise an Asparaginase/glutaminase domain in the interval 88–419 (GKVKIISTGG…EEVKRIMLTN (332 aa)). Catalysis depends on residues threonine 98, threonine 174, aspartate 175, and lysine 253.

It belongs to the asparaginase 1 family. GatD subfamily. As to quaternary structure, heterodimer of GatD and GatE.

It carries out the reaction L-glutamyl-tRNA(Gln) + L-glutamine + ATP + H2O = L-glutaminyl-tRNA(Gln) + L-glutamate + ADP + phosphate + H(+). Functionally, allows the formation of correctly charged Gln-tRNA(Gln) through the transamidation of misacylated Glu-tRNA(Gln) in organisms which lack glutaminyl-tRNA synthetase. The reaction takes place in the presence of glutamine and ATP through an activated gamma-phospho-Glu-tRNA(Gln). The GatDE system is specific for glutamate and does not act on aspartate. This Metallosphaera sedula (strain ATCC 51363 / DSM 5348 / JCM 9185 / NBRC 15509 / TH2) protein is Glutamyl-tRNA(Gln) amidotransferase subunit D.